A 430-amino-acid polypeptide reads, in one-letter code: Adenylosuccinate synthetase (430 aa).

Residues Gly13 to Lys19 and Gly41 to Thr43 each bind GTP. Asp14 acts as the Proton acceptor in catalysis. Mg(2+) contacts are provided by Asp14 and Gly41. Residues Asp14–Lys17, Asn39–His42, Thr130, Arg144, Gln225, Thr240, and Arg304 each bind IMP. The active-site Proton donor is His42. Residue Ala300 to Arg306 participates in substrate binding. GTP is bound by residues Arg306, Lys332 to Asp334, and Ser414 to Gly416.

It belongs to the adenylosuccinate synthetase family. In terms of assembly, homodimer. Requires Mg(2+) as cofactor.

The protein localises to the cytoplasm. The enzyme catalyses IMP + L-aspartate + GTP = N(6)-(1,2-dicarboxyethyl)-AMP + GDP + phosphate + 2 H(+). The protein operates within purine metabolism; AMP biosynthesis via de novo pathway; AMP from IMP: step 1/2. Its function is as follows. Plays an important role in the de novo pathway of purine nucleotide biosynthesis. Catalyzes the first committed step in the biosynthesis of AMP from IMP. This is Adenylosuccinate synthetase from Xanthomonas oryzae pv. oryzae (strain PXO99A).